The chain runs to 399 residues: MARPLKTIALEPIKQPERFTKEDFLSQEDITQALDLALKQVRLNMDYFKEDFPTPATKDNQYAIMDNTEWTNAFWTGCLWLAYEYSGDDAIKALAQANDLSFLDRVTRDIELDHHDLGFLYTPSCMAEWKLLKTPESREAALKAADKLVQRYQDKGGFIQAWGELGKKEDYRLIIDCLLNIQLLFFASQETGDNRYRDMAINHFYASANHVIRDDASAYHTFYFDPETGDPVKGVTRQGYSDDSAWARGQAWGIYGIPLTYRFLKEPELIQLFKGMTHYFLNRLPKDQVSYWDLIFGDGSEQSRDSSATAIAVCGIHEMLKTLPDHDPDKKTYEAAMHSMLRALIKDYANKDLKPGAPLLLHGVYSWHSGKGVDEGNIWGDYYYLEALLRFYKDWNPYW.

Aspartate 116 (nucleophile) is an active-site residue. 8 residues coordinate substrate: aspartate 116, aspartate 176, glycine 234, threonine 236, arginine 248, tryptophan 252, serine 366, and serine 369. Aspartate 176 (proton donor) is an active-site residue.

This sequence belongs to the glycosyl hydrolase 88 family. Monomer.

The enzyme catalyses beta-D-4-deoxy-Delta(4)-GlcpA-(1-&gt;3)-beta-D-GalpNAc6S + H2O = N-acetyl-beta-D-galactosamine 6-sulfate + 5-dehydro-4-deoxy-D-glucuronate. Functionally, catalyzes the hydrolysis of unsaturated hyaluronate and chondroitin disaccharides. Also degrades unsaturated heparin disaccharides. Releases 4-deoxy-4,5-didehydro D-glucuronic acid or 4-deoxy-4,5-didehydro L-iduronic acid from chondroitin disaccharides, hyaluronan disaccharides and heparin disaccharides and cleaves both glycosidic (1-&gt;3) and (1-&gt;4) bonds. Prefers sulfated glycosaminoglycans compared to unsulfated glycosaminoglycans. Probably required for mammalian cells invasion through the degradation of extracellular sulfated glycosaminoglycans such as chondroitin and hyaluronan. The chain is Unsaturated chondroitin disaccharide hydrolase (ugl) from Streptococcus pyogenes serotype M1.